The primary structure comprises 309 residues: Homoserine O-succinyltransferase (309 aa).

Residue Cys142 is the Acyl-thioester intermediate of the active site. Substrate-binding residues include Lys163 and Ser192. His235 serves as the catalytic Proton acceptor. Glu237 is an active-site residue. Arg249 provides a ligand contact to substrate.

Belongs to the MetA family. Homodimer.

The protein resides in the cytoplasm. It carries out the reaction L-homoserine + succinyl-CoA = O-succinyl-L-homoserine + CoA. The protein operates within amino-acid biosynthesis; L-methionine biosynthesis via de novo pathway; O-succinyl-L-homoserine from L-homoserine: step 1/1. Functionally, transfers a succinyl group from succinyl-CoA to L-homoserine, forming succinyl-L-homoserine. The chain is Homoserine O-succinyltransferase from Salmonella gallinarum (strain 287/91 / NCTC 13346).